A 305-amino-acid chain; its full sequence is MAKDIEISASESKFILEALRQNYRLDGRSFDQFRDVEITFGKEFGDVSVKMGNTKVHCRISCQIAQPYEDRPFEGLFVISTEISPMAGSQFENGNITGEDEVLCSRIIEKSVRRSGALDVEGLCIVAGSKCWAVRADVHFLDCDGGFIDASCIAVMAGLMHFKKPDITVHGEQIIVHPVNEREPVPLGILHIPICVTFSFFNPQDTEENIKGETNSEISIIDATLKEELLRDGVLTVTLNKNREVVQVSKAGGLPMDALTLMKCCHEAYSIIEKITDQILQLLKEDSEKRNKYAAMLTSENAREI.

It belongs to the RNase PH family. In terms of assembly, component of the RNA exosome complex. Specifically part of the catalytically inactive RNA exosome core complex (Exo-9) which may associate with the catalytic subunits RRP6 and DIS3 in cytoplasmic- and nuclear-specific RNA exosome complex forms. Exo-9 is formed by a hexameric base ring of RNase PH domain-containing subunits and a cap ring consisting of CSL4, RRP4 and RRP40. Interacts with LRP1.

The protein resides in the cytoplasm. It localises to the nucleus. The protein localises to the nucleolus. Functionally, non-catalytic component of the RNA exosome complex which has 3'-&gt;5' exoribonuclease activity and participates in a multitude of cellular RNA processing and degradation events. In the nucleus, the RNA exosome complex is involved in proper maturation of stable RNA species such as rRNA, snRNA and snoRNA, in the elimination of RNA processing by-products and non-coding 'pervasive' transcripts, such as antisense RNA species and cryptic unstable transcripts (CUTs), and of mRNAs with processing defects, thereby limiting or excluding their export to the cytoplasm. In the cytoplasm, the RNA exosome complex is involved in general mRNA turnover and in RNA surveillance pathways, preventing translation of aberrant mRNAs. The catalytic inactive RNA exosome core complex of 9 subunits (Exo-9) is proposed to play a pivotal role in the binding and presentation of RNA for ribonucleolysis, and to serve as a scaffold for the association with catalytic subunits and accessory proteins or complexes. RRP45 is part of the hexameric ring of RNase PH domain-containing subunits proposed to form a central channel which threads RNA substrates for degradation. The polypeptide is Exosome complex component RRP45 (RRP45) (Saccharomyces cerevisiae (strain ATCC 204508 / S288c) (Baker's yeast)).